The sequence spans 282 residues: UPF0761 membrane protein HAPS_1376 (282 aa).

Helical transmembrane passes span 32–52, 89–109, 124–144, 170–190, 202–222, and 234–254; these read LLSL…LPIF, MGII…SSID, VILS…FAGA, LLKF…YLIV, VGAL…IWYI, and ALAT…VVLL.

Belongs to the UPF0761 family.

It localises to the cell inner membrane. This is UPF0761 membrane protein HAPS_1376 from Glaesserella parasuis serovar 5 (strain SH0165) (Haemophilus parasuis).